Here is a 358-residue protein sequence, read N- to C-terminus: DnaJ homolog subfamily B member 11 (358 aa).

An N-terminal signal peptide occupies residues 1–22 (MAPQNLSTFCLLLLYLIGAVIA). The region spanning 25–90 (DFYKILGVPR…EKRKQYDTYG (66 aa)) is the J domain. Threonine 188 carries the phosphothreonine modification. N-linked (GlcNAc...) asparagine glycosylation is present at asparagine 261.

Part of a large chaperone multiprotein complex comprising DNAJB11, HSP90B1, HSPA5, HYOU, PDIA2, PDIA4, PDIA6, PPIB, SDF2L1, UGGT1 and very small amounts of ERP29, but not, or at very low levels, CALR nor CANX. Binds to denatured substrates in an ATP-independent manner. Interacts via the J domain with HSPA5 in an ATP-dependent manner. Post-translationally, contains high-mannose Endo H-sensitive carbohydrates. Cys-169, Cys-171, Cys-193 and Cys-196 form intramolecular disulfide bonds. The preferential partner for each Cys is not known.

It localises to the endoplasmic reticulum lumen. Its function is as follows. As a co-chaperone for HSPA5 it is required for proper folding, trafficking or degradation of proteins. Binds directly to both unfolded proteins that are substrates for ERAD and nascent unfolded peptide chains, but dissociates from the HSPA5-unfolded protein complex before folding is completed. May help recruiting HSPA5 and other chaperones to the substrate. Stimulates HSPA5 ATPase activity. It is necessary for maturation and correct trafficking of PKD1. The chain is DnaJ homolog subfamily B member 11 (Dnajb11) from Rattus norvegicus (Rat).